Reading from the N-terminus, the 177-residue chain is Large ribosomal subunit protein uL6 (177 aa).

The protein belongs to the universal ribosomal protein uL6 family. As to quaternary structure, part of the 50S ribosomal subunit.

Functionally, this protein binds to the 23S rRNA, and is important in its secondary structure. It is located near the subunit interface in the base of the L7/L12 stalk, and near the tRNA binding site of the peptidyltransferase center. The polypeptide is Large ribosomal subunit protein uL6 (Hahella chejuensis (strain KCTC 2396)).